Here is a 170-residue protein sequence, read N- to C-terminus: Glycine cleavage system H protein, mitochondrial (170 aa).

Residues 1–47 (MLRTTRLWTTRMPTVSKLFLRNSSGNALNKNKLPFLYSSQGPQAVRY) constitute a mitochondrion transit peptide. The Lipoyl-binding domain occupies 61 to 143 (TAFVGITKYA…MGDGWLVKMK (83 aa)). N6-lipoyllysine is present on lysine 102.

Belongs to the GcvH family. In terms of assembly, component of the glycine decarboxylase complex (GDC), which is composed of four proteins: P, T, L and H. Requires (R)-lipoate as cofactor.

It is found in the mitochondrion. Functionally, the glycine cleavage system (glycine decarboxylase complex) catalyzes the degradation of glycine. The H protein shuttles the methylamine group of glycine from the P protein to the T protein. This is Glycine cleavage system H protein, mitochondrial (GCV3) from Saccharomyces cerevisiae (strain ATCC 204508 / S288c) (Baker's yeast).